The following is a 297-amino-acid chain: MIKFYNRKTKSYEIEKISGEKLLNWLYNSKNINFLDIVTKKKFFSYIYGQYCDSKLSTLKIKSFVNNFNIDMNESLKSIGEFNSFNDFFTRKLKSNSRTIYGNKNILISPADSKVLAFENIDINKIIQVKGSNYSFKELLNSDKLCEQYKNGSCIIFRLCPTDYHRFHFIDSGICTKTNKINGYYYSVNPIALEKIPSLFCKNKREWSILKSNNFGDILYMEVGATCVGTIVQTYTANKEVSKGQEKGYFKFGGSTVILFFEKNKVSIDKDILMQSNLGYETKVLIGDKIGKKFCSK.

Catalysis depends on charge relay system; for autoendoproteolytic cleavage activity residues Asp-112, His-168, and Ser-255. Ser-255 serves as the catalytic Schiff-base intermediate with substrate; via pyruvic acid; for decarboxylase activity. Ser-255 is subject to Pyruvic acid (Ser); by autocatalysis.

It belongs to the phosphatidylserine decarboxylase family. PSD-B subfamily. Prokaryotic type II sub-subfamily. As to quaternary structure, heterodimer of a large membrane-associated beta subunit and a small pyruvoyl-containing alpha subunit. The cofactor is pyruvate. Post-translationally, is synthesized initially as an inactive proenzyme. Formation of the active enzyme involves a self-maturation process in which the active site pyruvoyl group is generated from an internal serine residue via an autocatalytic post-translational modification. Two non-identical subunits are generated from the proenzyme in this reaction, and the pyruvate is formed at the N-terminus of the alpha chain, which is derived from the carboxyl end of the proenzyme. The autoendoproteolytic cleavage occurs by a canonical serine protease mechanism, in which the side chain hydroxyl group of the serine supplies its oxygen atom to form the C-terminus of the beta chain, while the remainder of the serine residue undergoes an oxidative deamination to produce ammonia and the pyruvoyl prosthetic group on the alpha chain. During this reaction, the Ser that is part of the protease active site of the proenzyme becomes the pyruvoyl prosthetic group, which constitutes an essential element of the active site of the mature decarboxylase.

Its subcellular location is the cell membrane. It carries out the reaction a 1,2-diacyl-sn-glycero-3-phospho-L-serine + H(+) = a 1,2-diacyl-sn-glycero-3-phosphoethanolamine + CO2. It functions in the pathway phospholipid metabolism; phosphatidylethanolamine biosynthesis; phosphatidylethanolamine from CDP-diacylglycerol: step 2/2. Catalyzes the formation of phosphatidylethanolamine (PtdEtn) from phosphatidylserine (PtdSer). The polypeptide is Phosphatidylserine decarboxylase proenzyme (Clostridium tetani (strain Massachusetts / E88)).